The primary structure comprises 95 residues: ESAT-6-like protein EsxA (95 aa).

This sequence belongs to the WXG100 family. ESAT-6 subfamily. As to quaternary structure, forms a tight 1:1 complex with EsxB.

The chain is ESAT-6-like protein EsxA from Corynebacterium diphtheriae (strain ATCC 700971 / NCTC 13129 / Biotype gravis).